Here is a 176-residue protein sequence, read N- to C-terminus: Small ribosomal subunit protein uS5 (176 aa).

The region spanning 11-74 (LSEVLVDVNR…QAAKKKMMKV (64 aa)) is the S5 DRBM domain.

This sequence belongs to the universal ribosomal protein uS5 family. Part of the 30S ribosomal subunit. Contacts proteins S4 and S8.

Its function is as follows. With S4 and S12 plays an important role in translational accuracy. Functionally, located at the back of the 30S subunit body where it stabilizes the conformation of the head with respect to the body. The chain is Small ribosomal subunit protein uS5 from Rickettsia bellii (strain RML369-C).